The chain runs to 64 residues: Translational regulator CsrA 1 (64 aa).

The protein belongs to the CsrA/RsmA family. As to quaternary structure, homodimer; the beta-strands of each monomer intercalate to form a hydrophobic core, while the alpha-helices form wings that extend away from the core.

The protein resides in the cytoplasm. Functionally, a key translational regulator that binds mRNA to regulate translation initiation and/or mRNA stability. Mediates global changes in gene expression, shifting from rapid growth to stress survival by linking envelope stress, the stringent response and the catabolite repression systems. Usually binds in the 5'-UTR; binding at or near the Shine-Dalgarno sequence prevents ribosome-binding, repressing translation, binding elsewhere in the 5'-UTR can activate translation and/or stabilize the mRNA. Its function is antagonized by small RNA(s). This Pseudomonas syringae pv. tomato (strain ATCC BAA-871 / DC3000) protein is Translational regulator CsrA 1.